The chain runs to 470 residues: Light-independent protochlorophyllide reductase subunit N (470 aa).

[4Fe-4S] cluster is bound by residues Cys23, Cys48, and Cys108.

The protein belongs to the BchN/ChlN family. In terms of assembly, protochlorophyllide reductase is composed of three subunits; ChlL, ChlN and ChlB. Forms a heterotetramer of two ChlB and two ChlN subunits. It depends on [4Fe-4S] cluster as a cofactor.

It localises to the plastid. The protein resides in the chloroplast. It catalyses the reaction chlorophyllide a + oxidized 2[4Fe-4S]-[ferredoxin] + 2 ADP + 2 phosphate = protochlorophyllide a + reduced 2[4Fe-4S]-[ferredoxin] + 2 ATP + 2 H2O. It functions in the pathway porphyrin-containing compound metabolism; chlorophyll biosynthesis (light-independent). Component of the dark-operative protochlorophyllide reductase (DPOR) that uses Mg-ATP and reduced ferredoxin to reduce ring D of protochlorophyllide (Pchlide) to form chlorophyllide a (Chlide). This reaction is light-independent. The NB-protein (ChlN-ChlB) is the catalytic component of the complex. The chain is Light-independent protochlorophyllide reductase subunit N from Zygnema circumcarinatum (Green alga).